Here is a 103-residue protein sequence, read N- to C-terminus: Large ribosomal subunit protein bL21 (103 aa).

Belongs to the bacterial ribosomal protein bL21 family. In terms of assembly, part of the 50S ribosomal subunit. Contacts protein L20.

Functionally, this protein binds to 23S rRNA in the presence of protein L20. In Mannheimia succiniciproducens (strain KCTC 0769BP / MBEL55E), this protein is Large ribosomal subunit protein bL21.